We begin with the raw amino-acid sequence, 196 residues long: Probable malonic semialdehyde reductase RutE (196 aa).

This sequence belongs to the nitroreductase family. HadB/RutE subfamily. FMN serves as cofactor.

The enzyme catalyses 3-hydroxypropanoate + NADP(+) = 3-oxopropanoate + NADPH + H(+). Its function is as follows. May reduce toxic product malonic semialdehyde to 3-hydroxypropionic acid, which is excreted. The sequence is that of Probable malonic semialdehyde reductase RutE from Shigella sonnei (strain Ss046).